The following is a 509-amino-acid chain: Aspartic proteinase oryzasin-1 (509 aa).

Positions 1 to 24 are cleaved as a signal peptide; sequence MGTRSVALVLLAAVLLQALLPASA. The propeptide at 25 to 67 is activation peptide; that stretch reads AEGLVRIALKKRPIDENSRVAARLSGEEGARRLGLRGANSLGG. Residues 85–506 form the Peptidase A1 domain; that stretch reads YFGEIGVGTP…DYGKMRVGFA (422 aa). Asp103 is a catalytic residue. Cys116 and Cys122 are joined by a disulfide. The N-linked (GlcNAc...) asparagine glycan is linked to Asn252. An intrachain disulfide couples Cys281 to Cys285. Residue Asp290 is part of the active site. The Saposin B-type domain maps to 315 to 420; the sequence is VVSQECKTVV…NQLCDKLPSP (106 aa). Intrachain disulfides connect Cys320–Cys414, Cys345–Cys386, Cys351–Cys383, and Cys428–Cys465. N-linked (GlcNAc...) asparagine glycosylation is present at Asn400.

It belongs to the peptidase A1 family.

The protein resides in the vacuole. Its function is as follows. Involved in the breakdown of propeptides of storage proteins in protein-storage vacuoles. The polypeptide is Aspartic proteinase oryzasin-1 (Oryza sativa subsp. japonica (Rice)).